Here is a 340-residue protein sequence, read N- to C-terminus: Ketol-acid reductoisomerase (NADP(+)) (340 aa).

One can recognise a KARI N-terminal Rossmann domain in the interval 2-182 (ANIYYENHAD…GCTRAGVIET (181 aa)). Residues 25-28 (FGSQ), serine 51, serine 53, and 83-86 (DTAQ) each bind NADP(+). Histidine 108 is a catalytic residue. Residue glycine 134 participates in NADP(+) binding. Residues 183–328 (TFAEETETDL…RELRRMMPFV (146 aa)) form the KARI C-terminal knotted domain. Mg(2+)-binding residues include aspartate 191, glutamate 195, glutamate 227, and glutamate 231. Serine 252 contributes to the substrate binding site.

The protein belongs to the ketol-acid reductoisomerase family. It depends on Mg(2+) as a cofactor.

It catalyses the reaction (2R)-2,3-dihydroxy-3-methylbutanoate + NADP(+) = (2S)-2-acetolactate + NADPH + H(+). The enzyme catalyses (2R,3R)-2,3-dihydroxy-3-methylpentanoate + NADP(+) = (S)-2-ethyl-2-hydroxy-3-oxobutanoate + NADPH + H(+). It functions in the pathway amino-acid biosynthesis; L-isoleucine biosynthesis; L-isoleucine from 2-oxobutanoate: step 2/4. It participates in amino-acid biosynthesis; L-valine biosynthesis; L-valine from pyruvate: step 2/4. Functionally, involved in the biosynthesis of branched-chain amino acids (BCAA). Catalyzes an alkyl-migration followed by a ketol-acid reduction of (S)-2-acetolactate (S2AL) to yield (R)-2,3-dihydroxy-isovalerate. In the isomerase reaction, S2AL is rearranged via a Mg-dependent methyl migration to produce 3-hydroxy-3-methyl-2-ketobutyrate (HMKB). In the reductase reaction, this 2-ketoacid undergoes a metal-dependent reduction by NADPH to yield (R)-2,3-dihydroxy-isovalerate. The chain is Ketol-acid reductoisomerase (NADP(+)) from Roseiflexus castenholzii (strain DSM 13941 / HLO8).